A 267-amino-acid chain; its full sequence is 4-hydroxy-tetrahydrodipicolinate reductase (267 aa).

10–15 (GAGGKM) lines the NAD(+) pocket. Arginine 38 serves as a coordination point for NADP(+). NAD(+)-binding positions include 100–102 (GTT) and 126–129 (APNF). Histidine 156 acts as the Proton donor/acceptor in catalysis. Histidine 157 serves as a coordination point for (S)-2,3,4,5-tetrahydrodipicolinate. Lysine 160 (proton donor) is an active-site residue. 166-167 (GT) contacts (S)-2,3,4,5-tetrahydrodipicolinate.

The protein belongs to the DapB family.

Its subcellular location is the cytoplasm. It catalyses the reaction (S)-2,3,4,5-tetrahydrodipicolinate + NAD(+) + H2O = (2S,4S)-4-hydroxy-2,3,4,5-tetrahydrodipicolinate + NADH + H(+). The catalysed reaction is (S)-2,3,4,5-tetrahydrodipicolinate + NADP(+) + H2O = (2S,4S)-4-hydroxy-2,3,4,5-tetrahydrodipicolinate + NADPH + H(+). It functions in the pathway amino-acid biosynthesis; L-lysine biosynthesis via DAP pathway; (S)-tetrahydrodipicolinate from L-aspartate: step 4/4. Functionally, catalyzes the conversion of 4-hydroxy-tetrahydrodipicolinate (HTPA) to tetrahydrodipicolinate. This is 4-hydroxy-tetrahydrodipicolinate reductase from Desulfitobacterium hafniense (strain DSM 10664 / DCB-2).